Reading from the N-terminus, the 278-residue chain is Hydroxyethylthiazole kinase (278 aa).

Methionine 48 contributes to the substrate binding site. Residues arginine 124 and threonine 175 each coordinate ATP. Glycine 202 contributes to the substrate binding site.

This sequence belongs to the Thz kinase family. The cofactor is Mg(2+).

The catalysed reaction is 5-(2-hydroxyethyl)-4-methylthiazole + ATP = 4-methyl-5-(2-phosphooxyethyl)-thiazole + ADP + H(+). It functions in the pathway cofactor biosynthesis; thiamine diphosphate biosynthesis; 4-methyl-5-(2-phosphoethyl)-thiazole from 5-(2-hydroxyethyl)-4-methylthiazole: step 1/1. Its function is as follows. Catalyzes the phosphorylation of the hydroxyl group of 4-methyl-5-beta-hydroxyethylthiazole (THZ). This Clostridium botulinum (strain Alaska E43 / Type E3) protein is Hydroxyethylthiazole kinase.